Here is a 323-residue protein sequence, read N- to C-terminus: tRNA dimethylallyltransferase (323 aa).

12-19 is an ATP binding site; it reads GPTAAGKT. Position 14–19 (14–19) interacts with substrate; it reads TAAGKT. Interaction with substrate tRNA stretches follow at residues 37-40 and 161-165; these read DSAL and QRLIR.

The protein belongs to the IPP transferase family. As to quaternary structure, monomer. Mg(2+) serves as cofactor.

The enzyme catalyses adenosine(37) in tRNA + dimethylallyl diphosphate = N(6)-dimethylallyladenosine(37) in tRNA + diphosphate. Catalyzes the transfer of a dimethylallyl group onto the adenine at position 37 in tRNAs that read codons beginning with uridine, leading to the formation of N6-(dimethylallyl)adenosine (i(6)A). The chain is tRNA dimethylallyltransferase from Pseudomonas syringae pv. tomato (strain ATCC BAA-871 / DC3000).